The chain runs to 306 residues: N-acetylmuramic acid 6-phosphate etherase (306 aa).

An SIS domain is found at 59-222 (TSQALAKGGR…STGTMVMLGK (164 aa)). Catalysis depends on Glu87, which acts as the Proton donor. Residue Glu118 is part of the active site.

It belongs to the GCKR-like family. MurNAc-6-P etherase subfamily. In terms of assembly, homodimer.

It catalyses the reaction N-acetyl-D-muramate 6-phosphate + H2O = N-acetyl-D-glucosamine 6-phosphate + (R)-lactate. The protein operates within amino-sugar metabolism; N-acetylmuramate degradation. In terms of biological role, specifically catalyzes the cleavage of the D-lactyl ether substituent of MurNAc 6-phosphate, producing GlcNAc 6-phosphate and D-lactate. In Microcystis aeruginosa (strain NIES-843 / IAM M-2473), this protein is N-acetylmuramic acid 6-phosphate etherase.